The sequence spans 76 residues: Cytochrome c oxidase subunit 6C-1 (76 aa).

The Mitochondrial matrix segment spans residues 4 to 14; the sequence is GALLPKPQMHD. Residues 15–55 traverse the membrane as a helical segment; the sequence is PLSKRLWVHIVGAFIVDLGVAAAHKFGAAKPRKKAYADFYR. The Mitochondrial intermembrane portion of the chain corresponds to 56–76; the sequence is NHDPMKDFDEMRKAGVFRSVK.

This sequence belongs to the cytochrome c oxidase subunit 6c family. As to quaternary structure, component of the cytochrome c oxidase (complex IV, CIV), a multisubunit enzyme composed of 14 subunits. The complex is composed of a catalytic core of 3 subunits MT-CO1, MT-CO2 and MT-CO3, encoded in the mitochondrial DNA, and 11 supernumerary subunits COX4I, COX5A, COX5B, COX6A, COX6B, COX6C, COX7A, COX7B, COX7C, COX8 and NDUFA4, which are encoded in the nuclear genome. The complex exists as a monomer or a dimer and forms supercomplexes (SCs) in the inner mitochondrial membrane with NADH-ubiquinone oxidoreductase (complex I, CI) and ubiquinol-cytochrome c oxidoreductase (cytochrome b-c1 complex, complex III, CIII), resulting in different assemblies (supercomplex SCI(1)III(2)IV(1) and megacomplex MCI(2)III(2)IV(2)).

It localises to the mitochondrion inner membrane. It participates in energy metabolism; oxidative phosphorylation. In terms of biological role, component of the cytochrome c oxidase, the last enzyme in the mitochondrial electron transport chain which drives oxidative phosphorylation. The respiratory chain contains 3 multisubunit complexes succinate dehydrogenase (complex II, CII), ubiquinol-cytochrome c oxidoreductase (cytochrome b-c1 complex, complex III, CIII) and cytochrome c oxidase (complex IV, CIV), that cooperate to transfer electrons derived from NADH and succinate to molecular oxygen, creating an electrochemical gradient over the inner membrane that drives transmembrane transport and the ATP synthase. Cytochrome c oxidase is the component of the respiratory chain that catalyzes the reduction of oxygen to water. Electrons originating from reduced cytochrome c in the intermembrane space (IMS) are transferred via the dinuclear copper A center (CU(A)) of subunit 2 and heme A of subunit 1 to the active site in subunit 1, a binuclear center (BNC) formed by heme A3 and copper B (CU(B)). The BNC reduces molecular oxygen to 2 water molecules using 4 electrons from cytochrome c in the IMS and 4 protons from the mitochondrial matrix. This is Cytochrome c oxidase subunit 6C-1 (Cox6c1) from Rattus norvegicus (Rat).